A 221-amino-acid chain; its full sequence is Iron-sulfur cluster repair protein YtfE (221 aa).

The protein belongs to the RIC family. YtfE subfamily. Homodimer.

The protein resides in the cytoplasm. In terms of biological role, di-iron-containing protein involved in the repair of iron-sulfur clusters damaged by oxidative and nitrosative stress conditions. The chain is Iron-sulfur cluster repair protein YtfE from Dickeya chrysanthemi (strain Ech1591) (Dickeya zeae (strain Ech1591)).